Consider the following 45-residue polypeptide: Cytochrome b559 subunit beta (45 aa).

The helical transmembrane segment at 20–36 (WLALHTLGVPTVFFLGA) threads the bilayer. Residue H24 participates in heme binding.

It belongs to the PsbE/PsbF family. Heterodimer of an alpha subunit and a beta subunit. PSII is composed of 1 copy each of membrane proteins PsbA, PsbB, PsbC, PsbD, PsbE, PsbF, PsbH, PsbI, PsbJ, PsbK, PsbL, PsbM, PsbT, PsbX, PsbY, PsbZ, Psb30/Ycf12, peripheral proteins PsbO, CyanoQ (PsbQ), PsbU, PsbV and a large number of cofactors. It forms dimeric complexes. Heme b is required as a cofactor.

The protein localises to the cellular thylakoid membrane. Functionally, this b-type cytochrome is tightly associated with the reaction center of photosystem II (PSII). PSII is a light-driven water:plastoquinone oxidoreductase that uses light energy to abstract electrons from H(2)O, generating O(2) and a proton gradient subsequently used for ATP formation. It consists of a core antenna complex that captures photons, and an electron transfer chain that converts photonic excitation into a charge separation. The polypeptide is Cytochrome b559 subunit beta (Parasynechococcus marenigrum (strain WH8102)).